The following is a 268-amino-acid chain: Orotidine 5'-phosphate decarboxylase (268 aa).

Substrate-binding positions include D37, 59–61 (KTH), 91–100 (DRKFADIGNT), Y217, and R235. K93 serves as the catalytic Proton donor.

This sequence belongs to the OMP decarboxylase family.

The enzyme catalyses orotidine 5'-phosphate + H(+) = UMP + CO2. It functions in the pathway pyrimidine metabolism; UMP biosynthesis via de novo pathway; UMP from orotate: step 2/2. In Maudiozyma exigua (Yeast), this protein is Orotidine 5'-phosphate decarboxylase (URA4).